The primary structure comprises 464 residues: Plant intracellular Ras-group-related LRR protein 3 (464 aa).

Residues 106-138 are a coiled coil; it reads AAVVSLEEVHEGYEKQLRDLEEEIGRVYASAVE. LRR repeat units follow at residues 160–183, 184–206, 207–230, 232–252, 254–275, 276–299, 301–322, 323–347, 348–370, and 372–393; these read GGVVERIDLSDHELKLLPDALGKI, VGLVSLNVSRNNLRFLPDTISGL, EKLEELDLSSNRLVFLPDSIGLLL, LRILNVTGNKLTLLPESIAQC, SLVELDASFNNLTSLPANFGYG, LLNLERLSIQLNKIRFFPNSICEM, SLRYLDAHMNEIHGLPIAIGRL, TNLEVMNLSSNFSDLIELPDTISDL, ANLRELDLSNNQIRVLPDSFFRL, and KLEKLNLDQNPLEYPPQEMVNQ. The GVYW; degenerate signature appears at 398–406; sequence VREFMRKRW.

Belongs to the SHOC2 family. In terms of tissue distribution, widely expressed.

Functionally, leucine-rich repeat protein that likely mediates protein interactions, possibly in the context of signal transduction. This chain is Plant intracellular Ras-group-related LRR protein 3 (PIRL3), found in Arabidopsis thaliana (Mouse-ear cress).